The primary structure comprises 438 residues: Trigger factor (438 aa).

The 86-residue stretch at 163 to 248 folds into the PPIase FKBP-type domain; that stretch reads GEIAVLDFAA…VHAVKERKLP (86 aa).

The protein belongs to the FKBP-type PPIase family. Tig subfamily.

The protein localises to the cytoplasm. It catalyses the reaction [protein]-peptidylproline (omega=180) = [protein]-peptidylproline (omega=0). In terms of biological role, involved in protein export. Acts as a chaperone by maintaining the newly synthesized protein in an open conformation. Functions as a peptidyl-prolyl cis-trans isomerase. The chain is Trigger factor from Oleidesulfovibrio alaskensis (strain ATCC BAA-1058 / DSM 17464 / G20) (Desulfovibrio alaskensis).